The chain runs to 106 residues: Phosphoribosyl-ATP pyrophosphatase (106 aa).

The protein belongs to the PRA-PH family.

It is found in the cytoplasm. It catalyses the reaction 1-(5-phospho-beta-D-ribosyl)-ATP + H2O = 1-(5-phospho-beta-D-ribosyl)-5'-AMP + diphosphate + H(+). The protein operates within amino-acid biosynthesis; L-histidine biosynthesis; L-histidine from 5-phospho-alpha-D-ribose 1-diphosphate: step 2/9. The polypeptide is Phosphoribosyl-ATP pyrophosphatase (Geotalea daltonii (strain DSM 22248 / JCM 15807 / FRC-32) (Geobacter daltonii)).